A 711-amino-acid chain; its full sequence is DNA topoisomerase 3 (711 aa).

Residues 2–135 (KSLILAEKPS…IKRLWISSVT (134 aa)) form the Toprim domain. Residues Glu8 and Asp104 each contribute to the Mg(2+) site. Residues 152–580 (YQNLYEAALA…EMKNFTFKVV (429 aa)) enclose the Topo IA-type catalytic domain. Residues 186–191 (SLGRVQ) form an interaction with DNA region. The O-(5'-phospho-DNA)-tyrosine intermediate role is filled by Tyr305.

The protein belongs to the type IA topoisomerase family. Mg(2+) is required as a cofactor.

The catalysed reaction is ATP-independent breakage of single-stranded DNA, followed by passage and rejoining.. Functionally, releases the supercoiling and torsional tension of DNA, which is introduced during the DNA replication and transcription, by transiently cleaving and rejoining one strand of the DNA duplex. Introduces a single-strand break via transesterification at a target site in duplex DNA. The scissile phosphodiester is attacked by the catalytic tyrosine of the enzyme, resulting in the formation of a DNA-(5'-phosphotyrosyl)-enzyme intermediate and the expulsion of a 3'-OH DNA strand. The free DNA strand then undergoes passage around the unbroken strand, thus removing DNA supercoils. Finally, in the religation step, the DNA 3'-OH attacks the covalent intermediate to expel the active-site tyrosine and restore the DNA phosphodiester backbone. The protein is DNA topoisomerase 3 of Staphylococcus epidermidis (strain ATCC 12228 / FDA PCI 1200).